We begin with the raw amino-acid sequence, 31 residues long: Cytochrome b6-f complex subunit 6 (31 aa).

Residues 3–23 traverse the membrane as a helical segment; the sequence is ILISYFCFLLVFFLFTLILFI.

It belongs to the PetL family. The 4 large subunits of the cytochrome b6-f complex are cytochrome b6, subunit IV (17 kDa polypeptide, PetD), cytochrome f and the Rieske protein, while the 4 small subunits are PetG, PetL, PetM and PetN. The complex functions as a dimer.

The protein resides in the plastid. The protein localises to the chloroplast thylakoid membrane. Its function is as follows. Component of the cytochrome b6-f complex, which mediates electron transfer between photosystem II (PSII) and photosystem I (PSI), cyclic electron flow around PSI, and state transitions. PetL is important for photoautotrophic growth as well as for electron transfer efficiency and stability of the cytochrome b6-f complex. The sequence is that of Cytochrome b6-f complex subunit 6 from Welwitschia mirabilis (Tree tumbo).